We begin with the raw amino-acid sequence, 244 residues long: tRNA (guanine-N(7)-)-methyltransferase (244 aa).

S-adenosyl-L-methionine is bound by residues Glu75, Glu100, Asp127, and Asp150. Residue Asp150 is part of the active site. Substrate-binding positions include Lys154, Asp186, and 223–226 (TRFE).

Belongs to the class I-like SAM-binding methyltransferase superfamily. TrmB family.

The enzyme catalyses guanosine(46) in tRNA + S-adenosyl-L-methionine = N(7)-methylguanosine(46) in tRNA + S-adenosyl-L-homocysteine. Its pathway is tRNA modification; N(7)-methylguanine-tRNA biosynthesis. Catalyzes the formation of N(7)-methylguanine at position 46 (m7G46) in tRNA. The protein is tRNA (guanine-N(7)-)-methyltransferase of Xylella fastidiosa (strain M12).